Here is a 552-residue protein sequence, read N- to C-terminus: Probable protein kinase UbiB (552 aa).

A helical transmembrane segment spans residues 22-42 (LLPANLPLAATLLLLPFKLFP). In terms of domain architecture, Protein kinase spans 118–498 (SFNIEPLASA…QQLARQRNRR (381 aa)). ATP is bound by residues 124 to 132 (LASASVAQV) and lysine 146. The active-site Proton acceptor is the aspartate 281. 2 helical membrane-spanning segments follow: residues 501–521 (ITLL…GEGI) and 530–550 (FGDI…AWLL).

It belongs to the ABC1 family. UbiB subfamily.

It is found in the cell inner membrane. Its pathway is cofactor biosynthesis; ubiquinone biosynthesis [regulation]. Its function is as follows. Is probably a protein kinase regulator of UbiI activity which is involved in aerobic coenzyme Q (ubiquinone) biosynthesis. The polypeptide is Probable protein kinase UbiB (Cellvibrio japonicus (strain Ueda107) (Pseudomonas fluorescens subsp. cellulosa)).